A 189-amino-acid polypeptide reads, in one-letter code: Xanthine phosphoribosyltransferase (189 aa).

Positions 20 and 27 each coordinate xanthine. Ala-128–Ala-132 is a 5-phospho-alpha-D-ribose 1-diphosphate binding site. Lys-156 provides a ligand contact to xanthine.

It belongs to the purine/pyrimidine phosphoribosyltransferase family. Xpt subfamily. In terms of assembly, homodimer.

Its subcellular location is the cytoplasm. It carries out the reaction XMP + diphosphate = xanthine + 5-phospho-alpha-D-ribose 1-diphosphate. Its pathway is purine metabolism; XMP biosynthesis via salvage pathway; XMP from xanthine: step 1/1. Its function is as follows. Converts the preformed base xanthine, a product of nucleic acid breakdown, to xanthosine 5'-monophosphate (XMP), so it can be reused for RNA or DNA synthesis. This chain is Xanthine phosphoribosyltransferase, found in Lactobacillus delbrueckii subsp. bulgaricus (strain ATCC 11842 / DSM 20081 / BCRC 10696 / JCM 1002 / NBRC 13953 / NCIMB 11778 / NCTC 12712 / WDCM 00102 / Lb 14).